We begin with the raw amino-acid sequence, 92 residues long: Probable Fe(2+)-trafficking protein (92 aa).

The protein belongs to the Fe(2+)-trafficking protein family.

Could be a mediator in iron transactions between iron acquisition and iron-requiring processes, such as synthesis and/or repair of Fe-S clusters in biosynthetic enzymes. This Shewanella oneidensis (strain ATCC 700550 / JCM 31522 / CIP 106686 / LMG 19005 / NCIMB 14063 / MR-1) protein is Probable Fe(2+)-trafficking protein.